We begin with the raw amino-acid sequence, 477 residues long: Argininosuccinate lyase (477 aa).

The protein belongs to the lyase 1 family. Argininosuccinate lyase subfamily.

It localises to the cytoplasm. It catalyses the reaction 2-(N(omega)-L-arginino)succinate = fumarate + L-arginine. It participates in amino-acid biosynthesis; L-arginine biosynthesis; L-arginine from L-ornithine and carbamoyl phosphate: step 3/3. The chain is Argininosuccinate lyase from Corynebacterium glutamicum (strain R).